The following is a 676-amino-acid chain: Envelope glycoprotein (676 aa).

Residues 1–34 (MACSTLSKSPKDKIDPRDLLIPLILFLSLKGARS) form the signal peptide. A receptor-binding domain (RBD) region spans residues 35 to 270 (AAPGSSPHQV…SYQNLGPRIP (236 aa)). Residues 35-620 (AAPGSSPHQV…FNRSPWFTTL (586 aa)) lie on the Extracellular side of the membrane. Asparagine 46 carries N-linked (GlcNAc...) asparagine; by host glycosylation. Intrachain disulfides connect cysteine 80/cysteine 132, cysteine 106/cysteine 121, cysteine 107/cysteine 117, cysteine 155/cysteine 175, and cysteine 167/cysteine 180. Histidine 89 lines the Zn(2+) pocket. Residue aspartate 120 participates in Zn(2+) binding. The N-linked (GlcNAc...) asparagine; by host glycan is linked to asparagine 202. Cysteine 212 and cysteine 218 are disulfide-bonded. Positions 287–321 (NPLPKPAKSPPASSSTPTLISPSPTPTQPPPAGTG) are disordered. A compositionally biased stretch (low complexity) spans 296 to 308 (PPASSSTPTLISP). The span at 309–318 (SPTPTQPPPA) shows a compositional bias: pro residues. Asparagine 336 carries an N-linked (GlcNAc...) asparagine; by host glycan. 6 cysteine pairs are disulfide-bonded: cysteine 346-cysteine 349, cysteine 346-cysteine 573, cysteine 376-cysteine 430, cysteine 395-cysteine 407, cysteine 437-cysteine 450, and cysteine 565-cysteine 572. The short motif at 346-349 (CWLC) is the CXXC element. 2 N-linked (GlcNAc...) asparagine; by host glycosylation sites follow: asparagine 368 and asparagine 375. N-linked (GlcNAc...) asparagine; by host glycans are attached at residues asparagine 408 and asparagine 444. Residues 482–502 (VSLTLALLLGGLTMGGIAAGV) form a fusion peptide region. A coiled-coil region spans residues 513 to 547 (QQFQQLHAAVQDDLKEVEKSITNLEKSLTSLSEVV). The tract at residues 548–564 (LQNRRGLDLLFLKEGGL) is immunosuppression. Positions 565 to 573 (CAALKEECC) match the CX6CC motif. A helical membrane pass occupies residues 621-641 (ISTIMGPLIILLLILLFGPCI). The S-palmitoyl cysteine; by host moiety is linked to residue cysteine 640. At 642–676 (LNRLVQFVKDRISVVQALVLTQQYHQLKPLEYEPQ) the chain is on the cytoplasmic side. The YXXL motif; contains endocytosis signal motif lies at 665–668 (YHQL).

In terms of assembly, the mature envelope protein (Env) consists of a trimer of SU-TM heterodimers attached by a labile interchain disulfide bond. In terms of processing, specific enzymatic cleavages in vivo yield mature proteins. Envelope glycoproteins are synthesized as an inactive precursor that is N-glycosylated and processed likely by host cell furin or by a furin-like protease in the Golgi to yield the mature SU and TM proteins. The cleavage site between SU and TM requires the minimal sequence [KR]-X-[KR]-R. The R-peptide is released from the C-terminus of the cytoplasmic tail of the TM protein upon particle formation as a result of proteolytic cleavage by the viral protease. Cleavage of this peptide is required for TM to become fusogenic. The CXXC motif is highly conserved across a broad range of retroviral envelope proteins. It is thought to participate in the formation of a labile disulfide bond possibly with the CX6CC motif present in the transmembrane protein. Isomerization of the intersubunit disulfide bond to an SU intrachain disulfide bond is thought to occur upon receptor recognition in order to allow membrane fusion. Post-translationally, the transmembrane protein is palmitoylated. In terms of processing, the R-peptide is palmitoylated.

Its subcellular location is the virion membrane. It is found in the host cell membrane. The surface protein (SU) attaches the virus to the host cell by binding to its receptor. This interaction triggers the refolding of the transmembrane protein (TM) and is thought to activate its fusogenic potential by unmasking its fusion peptide. Fusion occurs at the host cell plasma membrane. Functionally, the transmembrane protein (TM) acts as a class I viral fusion protein. Under the current model, the protein has at least 3 conformational states: pre-fusion native state, pre-hairpin intermediate state, and post-fusion hairpin state. During viral and target cell membrane fusion, the coiled coil regions (heptad repeats) assume a trimer-of-hairpins structure, positioning the fusion peptide in close proximity to the C-terminal region of the ectodomain. The formation of this structure appears to drive apposition and subsequent fusion of viral and target cell membranes. Membranes fusion leads to delivery of the nucleocapsid into the cytoplasm. This Friend murine leukemia virus (isolate FB29) (FrMLV) protein is Envelope glycoprotein (env).